Here is a 417-residue protein sequence, read N- to C-terminus: Serine--tRNA ligase (417 aa).

L-serine is bound at residue Thr232 to Glu234. Residue Arg263–Glu265 participates in ATP binding. Glu286 contacts L-serine. Glu350–Ser353 contributes to the ATP binding site. Residue Ser385 participates in L-serine binding.

It belongs to the class-II aminoacyl-tRNA synthetase family. Type-1 seryl-tRNA synthetase subfamily. In terms of assembly, homodimer. The tRNA molecule binds across the dimer.

Its subcellular location is the cytoplasm. The enzyme catalyses tRNA(Ser) + L-serine + ATP = L-seryl-tRNA(Ser) + AMP + diphosphate + H(+). It catalyses the reaction tRNA(Sec) + L-serine + ATP = L-seryl-tRNA(Sec) + AMP + diphosphate + H(+). It participates in aminoacyl-tRNA biosynthesis; selenocysteinyl-tRNA(Sec) biosynthesis; L-seryl-tRNA(Sec) from L-serine and tRNA(Sec): step 1/1. Functionally, catalyzes the attachment of serine to tRNA(Ser). Is also able to aminoacylate tRNA(Sec) with serine, to form the misacylated tRNA L-seryl-tRNA(Sec), which will be further converted into selenocysteinyl-tRNA(Sec). The chain is Serine--tRNA ligase from Campylobacter hominis (strain ATCC BAA-381 / DSM 21671 / CCUG 45161 / LMG 19568 / NCTC 13146 / CH001A).